The primary structure comprises 279 residues: Lacto-N-neotetraose biosynthesis glycosyltransferase LgtB (279 aa).

The protein belongs to the glycosyltransferase 25 family.

It participates in glycan metabolism; lacto-N-neotetraose biosynthesis. Its pathway is bacterial outer membrane biogenesis; lipooligosaccharide biosynthesis. Its function is as follows. Adds the second galactose to the lacto-N-tetraose chain in lipooligosaccharide (LOS). The chain is Lacto-N-neotetraose biosynthesis glycosyltransferase LgtB (lgtB) from Neisseria meningitidis serogroup A / serotype 4A (strain DSM 15465 / Z2491).